Reading from the N-terminus, the 83-residue chain is Cytochrome c oxidase subunit 7A2, mitochondrial (83 aa).

The N-terminal 23 residues, 1–23 (MLRNLLALRQIAKRTISTSSRRQ), are a transit peptide targeting the mitochondrion. Residues 24–48 (FENKVPEKQKLFQEDNGIPVHLKGG) lie on the Mitochondrial matrix side of the membrane. K33 carries the N6-acetyllysine modification. Residues 49–77 (IADALLYRATLILTVGGTAYAMYELAVAS) traverse the membrane as a helical segment. Residues 78–83 (FPKKQD) lie on the Mitochondrial intermembrane side of the membrane.

It belongs to the cytochrome c oxidase VIIa family. Component of the cytochrome c oxidase (complex IV, CIV), a multisubunit enzyme composed of 14 subunits. The complex is composed of a catalytic core of 3 subunits MT-CO1, MT-CO2 and MT-CO3, encoded in the mitochondrial DNA, and 11 supernumerary subunits COX4I1 (or COX4I2), COX5A, COX5B, COX6A2 (or COX6A1), COX6B1 (or COX6B2), COX6C, COX7A1 (or COX7A2), COX7B, COX7C, COX8B and NDUFA4, which are encoded in the nuclear genome. The complex exists as a monomer or a dimer and forms supercomplexes (SCs) in the inner mitochondrial membrane with NADH-ubiquinone oxidoreductase (complex I, CI) and ubiquinol-cytochrome c oxidoreductase (cytochrome b-c1 complex, complex III, CIII), resulting in different assemblies (supercomplex SCI(1)III(2)IV(1) and megacomplex MCI(2)III(2)IV(2)). Interacts with PET100.

It is found in the mitochondrion inner membrane. The protein operates within energy metabolism; oxidative phosphorylation. Component of the cytochrome c oxidase, the last enzyme in the mitochondrial electron transport chain which drives oxidative phosphorylation. The respiratory chain contains 3 multisubunit complexes succinate dehydrogenase (complex II, CII), ubiquinol-cytochrome c oxidoreductase (cytochrome b-c1 complex, complex III, CIII) and cytochrome c oxidase (complex IV, CIV), that cooperate to transfer electrons derived from NADH and succinate to molecular oxygen, creating an electrochemical gradient over the inner membrane that drives transmembrane transport and the ATP synthase. Cytochrome c oxidase is the component of the respiratory chain that catalyzes the reduction of oxygen to water. Electrons originating from reduced cytochrome c in the intermembrane space (IMS) are transferred via the dinuclear copper A center (CU(A)) of subunit 2 and heme A of subunit 1 to the active site in subunit 1, a binuclear center (BNC) formed by heme A3 and copper B (CU(B)). The BNC reduces molecular oxygen to 2 water molecules using 4 electrons from cytochrome c in the IMS and 4 protons from the mitochondrial matrix. The chain is Cytochrome c oxidase subunit 7A2, mitochondrial (COX7A2) from Bos taurus (Bovine).